A 157-amino-acid chain; its full sequence is uncharacterized protein (157 aa).

An N-terminal signal peptide occupies residues 1 to 17 (MSMKTKAAFHLVLFGLA). C18 carries N-palmitoyl cysteine lipidation. Residue C18 is the site of S-diacylglycerol cysteine attachment. A run of 3 helical transmembrane segments spans residues 42–64 (MVFDLNLTPFILFVAASAVYLYL), 98–120 (ASYIAVYFSLPAAAVLLIFYPLF), and 124–146 (IPFFPIIIVFIIMIIQHLSYVIS).

It is found in the cell membrane. This is an uncharacterized protein from Bacillus subtilis (strain 168).